The sequence spans 405 residues: ATP phosphoribosyltransferase regulatory subunit (405 aa).

It belongs to the class-II aminoacyl-tRNA synthetase family. HisZ subfamily. Heteromultimer composed of HisG and HisZ subunits.

Its subcellular location is the cytoplasm. Its pathway is amino-acid biosynthesis; L-histidine biosynthesis; L-histidine from 5-phospho-alpha-D-ribose 1-diphosphate: step 1/9. Required for the first step of histidine biosynthesis. May allow the feedback regulation of ATP phosphoribosyltransferase activity by histidine. The chain is ATP phosphoribosyltransferase regulatory subunit from Microcystis aeruginosa (strain NIES-843 / IAM M-2473).